Consider the following 26-residue polypeptide: Histone H2B.1, sperm (26 aa).

Residues methionine 1–arginine 26 are disordered. 3 short sequence motifs (SPKK motif) span residues serine 6 to lysine 9, serine 11 to lysine 14, and serine 16 to lysine 19. Residues proline 7 to arginine 26 are compositionally biased toward basic residues. Phosphoserine is present on residues serine 11 and serine 16.

The protein belongs to the histone H2B family. The nucleosome is a histone octamer containing two molecules each of H2A, H2B, H3 and H4 assembled in one H3-H4 heterotetramer and two H2A-H2B heterodimers. The octamer wraps approximately 147 bp of DNA. In terms of processing, monoubiquitination gives a specific tag for epigenetic transcriptional activation and is also prerequisite for histone H3 'Lys-4' and 'Lys-79' methylation. Post-translationally, phosphorylated on SPKK motifs 2 and 3; which may regulate DNA binding. Dephosphorylated during maturation of spermatids to mature sperm and rephosphorylated at fertilization.

Its subcellular location is the nucleus. It is found in the chromosome. In terms of biological role, core component of nucleosome. Nucleosomes wrap and compact DNA into chromatin, limiting DNA accessibility to the cellular machineries which require DNA as a template. Histones thereby play a central role in transcription regulation, DNA repair, DNA replication and chromosomal stability. DNA accessibility is regulated via a complex set of post-translational modifications of histones, also called histone code, and nucleosome remodeling. The chain is Histone H2B.1, sperm from Echinus esculentus (Sea urchin).